We begin with the raw amino-acid sequence, 169 residues long: Ribosome maturation factor RimM (169 aa).

The PRC barrel domain occupies 94–166 (EEGFYDHELE…TATITPPDGL (73 aa)).

It belongs to the RimM family. As to quaternary structure, binds ribosomal protein uS19.

It localises to the cytoplasm. In terms of biological role, an accessory protein needed during the final step in the assembly of 30S ribosomal subunit, possibly for assembly of the head region. Essential for efficient processing of 16S rRNA. May be needed both before and after RbfA during the maturation of 16S rRNA. It has affinity for free ribosomal 30S subunits but not for 70S ribosomes. The polypeptide is Ribosome maturation factor RimM (Corynebacterium efficiens (strain DSM 44549 / YS-314 / AJ 12310 / JCM 11189 / NBRC 100395)).